Consider the following 175-residue polypeptide: Ribosome maturation factor RimM (175 aa).

One can recognise a PRC barrel domain in the interval 98-175 (EGEYYWYQLE…EMRVDWDADF (78 aa)).

It belongs to the RimM family. As to quaternary structure, binds ribosomal protein uS19.

It localises to the cytoplasm. Its function is as follows. An accessory protein needed during the final step in the assembly of 30S ribosomal subunit, possibly for assembly of the head region. Essential for efficient processing of 16S rRNA. May be needed both before and after RbfA during the maturation of 16S rRNA. It has affinity for free ribosomal 30S subunits but not for 70S ribosomes. The polypeptide is Ribosome maturation factor RimM (Pseudomonas paraeruginosa (strain DSM 24068 / PA7) (Pseudomonas aeruginosa (strain PA7))).